The sequence spans 462 residues: Cysteine desulfurase, mitochondrial (462 aa).

Residues 132–133 (AT), N212, Q240, and 260–262 (SGH) contribute to the pyridoxal 5'-phosphate site. At K263 the chain carries N6-(pyridoxal phosphate)lysine. T300 serves as a coordination point for pyridoxal 5'-phosphate. The active-site Cysteine persulfide intermediate is C386. Residue C386 coordinates [2Fe-2S] cluster.

Belongs to the class-V pyridoxal-phosphate-dependent aminotransferase family. NifS/IscS subfamily. Component of the mitochondrial core iron-sulfur cluster (ISC) assembly complex at least composed of the cystein desulfurase Nfs1, the scaffold protein IscU, the accessory protein bcn92/Isd11/Lyrm4, and probably fh/frataxin. Interacts with bcn92/Isd11/Lyrm4 and IscU. Pyridoxal 5'-phosphate is required as a cofactor. Ubiquitous expression at high levels in any life stage.

Its subcellular location is the mitochondrion. The protein resides in the nucleus. It carries out the reaction (sulfur carrier)-H + L-cysteine = (sulfur carrier)-SH + L-alanine. With respect to regulation, active when in complex with bcn92/Isd11/Lyrm4. L-cysteine binding kinetics are reduced in the presence of bcn92/Isd11/Lyrm4 and IscU. Activity is regulated by other components of the mitochondrial core iron-sulfur cluster (ISC) complex; Activity is reduced in the presence of IscU but enhanced when both IscU and fh/frataxin are present. Catalyzes the removal of elemental sulfur from cysteine to produce alanine. It supplies the inorganic sulfur for iron-sulfur (Fe-S) clusters. The sequence is that of Cysteine desulfurase, mitochondrial from Drosophila melanogaster (Fruit fly).